We begin with the raw amino-acid sequence, 189 residues long: dCTP deaminase (189 aa).

Residues 112 to 117 (KSTYAR), 136 to 138 (TLE), Gln-157, Tyr-171, and Gln-181 contribute to the dCTP site. The active-site Proton donor/acceptor is the Glu-138.

This sequence belongs to the dCTP deaminase family. Homotrimer.

The enzyme catalyses dCTP + H2O + H(+) = dUTP + NH4(+). Its pathway is pyrimidine metabolism; dUMP biosynthesis; dUMP from dCTP (dUTP route): step 1/2. Its function is as follows. Catalyzes the deamination of dCTP to dUTP. This Halorhodospira halophila (strain DSM 244 / SL1) (Ectothiorhodospira halophila (strain DSM 244 / SL1)) protein is dCTP deaminase.